The following is a 506-amino-acid chain: uncharacterized protein (506 aa).

282–289 (GIQGTGKS) serves as a coordination point for ATP.

It belongs to the AAA ATPase family. Highly divergent.

Its subcellular location is the plastid. It localises to the chloroplast. This is an uncharacterized protein from Guillardia theta (Cryptophyte).